We begin with the raw amino-acid sequence, 354 residues long: Macrosialin (354 aa).

An N-terminal signal peptide occupies residues 1–21; that stretch reads MRLAVLFSGALLGLLAAQGTG. Residues 22–319 are Extracellular-facing; that stretch reads NDCPHKKSAT…QSFSCPSDRS (298 aa). Positions 23 to 140 are mucin-like; the sequence is DCPHKKSATL…SPGFTSSAHP (118 aa). Residues 40–51 are compositionally biased toward low complexity; that stretch reads PTVTESTGTTSH. Residues 40–162 are disordered; sequence PTVTESTGTT…SKETIGDYTW (123 aa). The segment covering 52–61 has biased composition (basic residues); that stretch reads RTTKSHKTTT. Positions 62-84 are enriched in low complexity; that stretch reads HRTTTTGTTSHGPTTATHNPTTT. 2 consecutive repeat copies span residues 70-99 and 100-129. Residues 70–129 form a 2 X 30 AA tandem repeats region; that stretch reads TSHGPTTATHNPTTTSHGNVTVHPTSNSTATSQGPSTATHSPATTSHGNATVHPTSNSTA. The segment covering 85-102 has biased composition (polar residues); that stretch reads SHGNVTVHPTSNSTATSQ. 2 N-linked (GlcNAc...) asparagine glycosylation sites follow: Asn-88 and Asn-96. The span at 103–117 shows a compositional bias: low complexity; that stretch reads GPSTATHSPATTSHG. Asn-118 and Asn-126 each carry an N-linked (GlcNAc...) asparagine glycan. Residues 121–135 show a composition bias toward polar residues; sequence VHPTSNSTATSPGFT. Pro residues predominate over residues 140–150; that stretch reads PEPPPPSPSPS. 5 N-linked (GlcNAc...) asparagine glycosylation sites follow: Asn-164, Asn-199, Asn-246, Asn-261, and Asn-279. Cys-169 and Cys-207 are oxidised to a cystine. Cys-277 and Cys-314 are joined by a disulfide. Residues 320 to 344 form a helical membrane-spanning segment; it reads ILLPLIIGLILLGLLALVLIAFCII. Over 345-354 the chain is Cytoplasmic; that stretch reads RRRPSAYQAL.

The protein belongs to the LAMP family. N- and O-glycosylated. Highly expressed by blood monocytes and tissue macrophages. Also expressed in lymphocytes, fibroblasts and endothelial cells. Expressed in many tumor cell lines which could allow them to attach to selectins on vascular endothelium, facilitating their dissemination to secondary sites.

The protein resides in the cell membrane. Its subcellular location is the endosome membrane. The protein localises to the lysosome membrane. In terms of biological role, could play a role in phagocytic activities of tissue macrophages, both in intracellular lysosomal metabolism and extracellular cell-cell and cell-pathogen interactions. Binds to tissue- and organ-specific lectins or selectins, allowing homing of macrophage subsets to particular sites. Rapid recirculation of CD68 from endosomes and lysosomes to the plasma membrane may allow macrophages to crawl over selectin-bearing substrates or other cells. In Homo sapiens (Human), this protein is Macrosialin (CD68).